Here is a 217-residue protein sequence, read N- to C-terminus: uncharacterized protein (217 aa).

4 consecutive transmembrane segments (helical) span residues 9 to 29 (ISLA…LSTI), 54 to 74 (FLST…LLEL), 103 to 125 (LMAY…RFLS), and 135 to 157 (IVFW…ASYI).

The protein belongs to the DP1 family.

The protein resides in the endoplasmic reticulum membrane. This is an uncharacterized protein from Schizosaccharomyces pombe (strain 972 / ATCC 24843) (Fission yeast).